The following is a 210-amino-acid chain: Rho-related GTP-binding protein RhoD (210 aa).

A GTP-binding site is contributed by 24–31 (GDGGCGKT). The Effector region signature appears at 46–54 (YTPTVFERY). Residues 71–75 (DTAGQ) and 129–132 (CKTD) each bind GTP. Residue Cys-207 is modified to Cysteine methyl ester. Cys-207 carries S-geranylgeranyl cysteine lipidation. The propeptide at 208 to 210 (VVT) is removed in mature form.

The protein belongs to the small GTPase superfamily. Rho family. As to quaternary structure, interacts (in GTP-bound form) with DIAPH2 isoform 3, DAPK3, FILIP1 and WHAMM. Interacts with PAK5. Interacts (independent of GTP-loaded status) with ANKFY1. In terms of tissue distribution, heart, placenta, liver, skeletal muscle, and pancreas and, with weaker intensity, in several other tissues.

It localises to the cell membrane. The protein resides in the early endosome. Involved in endosome dynamics. May coordinate membrane transport with the function of the cytoskeleton. Involved in the internalization and trafficking of activated tyrosine kinase receptors such as PDGFRB. Participates in the reorganization of actin cytoskeleton; the function seems to involve WHAMM and includes regulation of filopodia formation and actin filament bundling. Can modulate the effect of DAPK3 in reorganization of actin cytoskeleton and focal adhesion dissolution. The protein is Rho-related GTP-binding protein RhoD of Homo sapiens (Human).